We begin with the raw amino-acid sequence, 153 residues long: Actin-related protein 2/3 complex subunit 5-like protein (153 aa).

Position 64 is a phosphoserine (S64).

It belongs to the ARPC5 family. In terms of assembly, may be a component of the Arp2/3 complex in which it may replace ARPC5.

It localises to the cytoplasm. It is found in the cytoskeleton. In terms of biological role, may function as component of the Arp2/3 complex which is involved in regulation of actin polymerization and together with an activating nucleation-promoting factor (NPF) mediates the formation of branched actin networks. In Pongo abelii (Sumatran orangutan), this protein is Actin-related protein 2/3 complex subunit 5-like protein (ARPC5L).